We begin with the raw amino-acid sequence, 307 residues long: Epimerase family protein ML0860 (307 aa).

Belongs to the NAD(P)-dependent epimerase/dehydratase family. SDR39U1 subfamily.

In Mycobacterium leprae (strain TN), this protein is Epimerase family protein ML0860.